The chain runs to 1387 residues: Collagen-like protein 6 (1387 aa).

Residue Asn6 is glycosylated (N-linked (GlcNAc...) asparagine; by host). 6 Collagen-like domains span residues 95–154, 161–220, 266–325, 344–403, 450–508, and 512–751; these read GNNG…KGDI, GDKG…KGDN, GEKG…KGEM, GSKG…KGEK, IKGD…KGDI, and GEKG…SGSS. 3 disordered regions span residues 98–219, 268–422, and 454–753; these read GNNG…DKGD, KGEI…QNQG, and KGEK…SSCQ. Composition is skewed to basic and acidic residues over residues 114–181, 189–199, 207–219, 268–340, 364–382, 390–405, 454–535, and 544–747; these read IKGD…KGSK, SKGDNGDKGSK, SKGD…DKGD, KGEI…DGIK, KGDR…KGDN, SKGD…EKGE, KGEK…KGDI, and KGEK…DKGE. N-linked (GlcNAc...) asparagine; by host glycosylation is found at Asn794, Asn814, Asn819, Asn826, Asn846, Asn886, Asn894, Asn969, Asn1032, Asn1077, Asn1123, Asn1200, Asn1224, Asn1232, and Asn1233.

In terms of processing, may be hydroxylated on lysine by the viral-encoded procollagen-lysine,2-oxoglutarate 5-dioxygenase.

The protein localises to the virion. In terms of biological role, may participate in the formation of a layer of cross-linked glycosylated fibrils at the viral surface thus giving it a hairy-like appearance. This is Collagen-like protein 6 from Acanthamoeba polyphaga mimivirus (APMV).